We begin with the raw amino-acid sequence, 331 residues long: Protein FLX-like 1 (331 aa).

The segment at 1 to 51 is disordered; the sequence is MSGRNRGPPPPSMKGGSYSGLQAPVHQPPFVRGLGGGPVPPPPHPSMIDDS. Positions 69-252 form a coiled coil; that stretch reads ILEDRLAAQN…AEIANSETSA (184 aa). The span at 306-321 shows a compositional bias: low complexity; that stretch reads QAAWAGGYDPQQQQQQ. Positions 306 to 331 are disordered; the sequence is QAAWAGGYDPQQQQQQQPPPQGQGHR. Residues 322–331 are compositionally biased toward pro residues; it reads QPPPQGQGHR.

The protein belongs to the FLX family. As to quaternary structure, interacts with FRI.

Has no transcriptional activation activity. This Arabidopsis thaliana (Mouse-ear cress) protein is Protein FLX-like 1 (FLXL1).